A 377-amino-acid polypeptide reads, in one-letter code: Succinyl-diaminopimelate desuccinylase (377 aa).

His67 lines the Zn(2+) pocket. Residue Asp69 is part of the active site. A Zn(2+)-binding site is contributed by Asp100. The active-site Proton acceptor is the Glu134. The Zn(2+) site is built by Glu135, Glu163, and His349.

The protein belongs to the peptidase M20A family. DapE subfamily. Homodimer. Zn(2+) is required as a cofactor. Co(2+) serves as cofactor.

The catalysed reaction is N-succinyl-(2S,6S)-2,6-diaminopimelate + H2O = (2S,6S)-2,6-diaminopimelate + succinate. It functions in the pathway amino-acid biosynthesis; L-lysine biosynthesis via DAP pathway; LL-2,6-diaminopimelate from (S)-tetrahydrodipicolinate (succinylase route): step 3/3. In terms of biological role, catalyzes the hydrolysis of N-succinyl-L,L-diaminopimelic acid (SDAP), forming succinate and LL-2,6-diaminopimelate (DAP), an intermediate involved in the bacterial biosynthesis of lysine and meso-diaminopimelic acid, an essential component of bacterial cell walls. In Haemophilus influenzae (strain PittGG), this protein is Succinyl-diaminopimelate desuccinylase.